Here is a 65-residue protein sequence, read N- to C-terminus: Large ribosomal subunit protein bL35 (65 aa).

The segment at 1–65 (MQKIKTNRSA…KELKRLLPGM (65 aa)) is disordered. Composition is skewed to basic residues over residues 10 to 19 (AAKRFKRTKS) and 33 to 47 (LTKKNRKRKRSLRKS). Residues 54-65 (NNKELKRLLPGM) are compositionally biased toward basic and acidic residues.

It belongs to the bacterial ribosomal protein bL35 family.

The protein is Large ribosomal subunit protein bL35 of Desulfosudis oleivorans (strain DSM 6200 / JCM 39069 / Hxd3) (Desulfococcus oleovorans).